The chain runs to 583 residues: Threonine--tRNA ligase (583 aa).

A catalytic region spans residues 185–478; it reads DHRKLGRELD…LVEHYGGAFP (294 aa). Residues C278, H329, and H455 each contribute to the Zn(2+) site.

This sequence belongs to the class-II aminoacyl-tRNA synthetase family. In terms of assembly, homodimer. It depends on Zn(2+) as a cofactor.

It localises to the cytoplasm. The catalysed reaction is tRNA(Thr) + L-threonine + ATP = L-threonyl-tRNA(Thr) + AMP + diphosphate + H(+). Functionally, catalyzes the attachment of threonine to tRNA(Thr) in a two-step reaction: L-threonine is first activated by ATP to form Thr-AMP and then transferred to the acceptor end of tRNA(Thr). Also edits incorrectly charged L-seryl-tRNA(Thr). The protein is Threonine--tRNA ligase of Borrelia turicatae (strain 91E135).